A 328-amino-acid chain; its full sequence is GMP reductase (328 aa).

Cysteine 176 functions as the Thioimidate intermediate in the catalytic mechanism. 205-228 (IIADGGIRTHGDIAKSIRFGASMI) serves as a coordination point for NADP(+).

The protein belongs to the IMPDH/GMPR family. GuaC type 2 subfamily.

The catalysed reaction is IMP + NH4(+) + NADP(+) = GMP + NADPH + 2 H(+). Its function is as follows. Catalyzes the irreversible NADPH-dependent deamination of GMP to IMP. It functions in the conversion of nucleobase, nucleoside and nucleotide derivatives of G to A nucleotides, and in maintaining the intracellular balance of A and G nucleotides. The polypeptide is GMP reductase (Streptococcus pneumoniae serotype 19F (strain G54)).